A 648-amino-acid chain; its full sequence is RalA-binding protein 1 (648 aa).

The interval 1-158 is disordered; that stretch reads MTECFLPPSS…KKSKDLTAAD (158 aa). Thr2 carries the N-acetylthreonine modification. Over residues 24 to 33 the composition is skewed to polar residues; it reads LTRTPSSEEI. Phosphoserine occurs at positions 29, 30, and 34. At Thr44 the chain carries Phosphothreonine. 2 positions are modified to phosphoserine: Ser48 and Ser62. Residues 52 to 68 are compositionally biased toward basic and acidic residues; sequence DVLHEPPDTVSDDDKDH. 69–74 contributes to the ATP binding site; sequence GKKKGK. Positions 69 to 79 are enriched in basic residues; sequence GKKKGKFKKKE. Phosphoserine is present on residues Ser92 and Ser93. Over residues 102–118 the composition is skewed to basic residues; the sequence is KVKRSKGIHVFKKPSFS. Residues 102 to 119 form a nuclear localization signal region; sequence KVKRSKGIHVFKKPSFSK. Positions 119–155 are enriched in basic and acidic residues; the sequence is KKKEKDFKIKEKPKEEKHKEEKHKEEKHKEKKSKDLT. A mediates association with membranes and could form transmembrane domains region spans residues 154 to 219; that stretch reads LTAADVVKQW…PAVFRECVDY (66 aa). The Rho-GAP domain occupies 192–380; sequence VPLVDAVERT…VVLKQVTRPL (189 aa). The tract at residues 403–499 is mediates interaction with RALA and RALB; sequence RRQEFLLNCL…LTEQEELLAM (97 aa). An ATP-binding site is contributed by 418–425; sequence GGIKDLSK. Phosphoserine occurs at positions 461 and 463. The tract at residues 500–648 is mediates interaction with REPS1 and REPS2; it reads EQFLRRQIAS…PSKDRKETPI (149 aa). 2 disordered regions span residues 525-552 and 598-648; these read QSRQ…EEEL and RAKS…ETPI. A compositionally biased stretch (acidic residues) spans 536–552; it reads EEYSSDSESESEDEEEL. Residues 629–648 show a composition bias toward basic and acidic residues; sequence RVAKEQAKASPSKDRKETPI. Ser638 carries the phosphoserine modification.

In terms of assembly, interacts with the GTP-bound form of RALA (via effector domain); during mitosis, recruits RALBP1 to the mitochondrion where it promotes DNM1L phosphorylation and mitochondrial fission. Interacts with DNM1L; mediates its mitotic kinase cyclin B-CDK1-mediated phosphorylation during mitosis to promote mitochondrial fission. Interacts with the mitotic kinase cyclin B-CDK1 during mitosis. Interacts with the GTP-bound form of RALB (via effector domain). Interacts with REPS1; the interaction is direct and does not affect RALA-binding nor GTPase activator activity of RALBP1. Interacts with REPS2; the interaction is direct and does not affect RALA-binding nor GTPase activator activity of RALBP1. Interacts with EPN1, NUMB and TFAP2A during interphase and mitosis. Interacts with AP2M1; as part of the AP2 complex. Interacts with CDC42. Interacts with RAC1. Post-translationally, tyrosine-phosphorylated upon stimulation of cells with EGF. May undergo proteolytic cleavage to give peptides which reassemble to form a transporter complex. As to expression, ubiquitous. The highest level of expression was observed in ovaries and skeletal muscle, whereas the lowest was found in spleen, liver and peripheral blood leukocytes.

It is found in the cell membrane. The protein resides in the cytoplasm. Its subcellular location is the cytosol. It localises to the cytoskeleton. The protein localises to the spindle pole. It is found in the nucleus. The protein resides in the mitochondrion. The enzyme catalyses an S-substituted glutathione(in) + ATP + H2O = an S-substituted glutathione(out) + ADP + phosphate + H(+). It carries out the reaction ATP + H2O + xenobioticSide 1 = ADP + phosphate + xenobioticSide 2.. It catalyses the reaction leukotriene C4(in) + ATP + H2O = leukotriene C4(out) + ADP + phosphate + H(+). Multifunctional protein that functions as a downstream effector of RALA and RALB. As a GTPase-activating protein/GAP can inactivate CDC42 and RAC1 by stimulating their GTPase activity. As part of the Ral signaling pathway, may also regulate ligand-dependent EGF and insulin receptors-mediated endocytosis. During mitosis, may act as a scaffold protein in the phosphorylation of EPSIN/EPN1 by the mitotic kinase cyclin B-CDK1, preventing endocytosis during that phase of the cell cycle. During mitosis, also controls mitochondrial fission as an effector of RALA. Recruited to mitochondrion by RALA, acts as a scaffold to foster the mitotic kinase cyclin B-CDK1-mediated phosphorylation and activation of DNM1L. In terms of biological role, could also function as a primary ATP-dependent active transporter for glutathione conjugates of electrophiles. May also actively catalyze the efflux of a wide range of substrates including xenobiotics like doxorubicin (DOX) contributing to cell multidrug resistance. The sequence is that of RalA-binding protein 1 from Mus musculus (Mouse).